A 1217-amino-acid polypeptide reads, in one-letter code: ATP-dependent helicase/nuclease subunit A (1217 aa).

In terms of domain architecture, UvrD-like helicase ATP-binding spans V10–R475. A31–T38 serves as a coordination point for ATP. The UvrD-like helicase C-terminal domain occupies K476–G786.

Belongs to the helicase family. AddA subfamily. In terms of assembly, heterodimer of AddA and AddB/RexB. Mg(2+) is required as a cofactor.

It carries out the reaction Couples ATP hydrolysis with the unwinding of duplex DNA by translocating in the 3'-5' direction.. The catalysed reaction is ATP + H2O = ADP + phosphate + H(+). Functionally, the heterodimer acts as both an ATP-dependent DNA helicase and an ATP-dependent, dual-direction single-stranded exonuclease. Recognizes the chi site generating a DNA molecule suitable for the initiation of homologous recombination. The AddA nuclease domain is required for chi fragment generation; this subunit has the helicase and 3' -&gt; 5' nuclease activities. The chain is ATP-dependent helicase/nuclease subunit A from Staphylococcus aureus (strain MW2).